A 439-amino-acid chain; its full sequence is Xylose isomerase (439 aa).

Catalysis depends on residues His101 and Asp104. 7 residues coordinate Mg(2+): Glu232, Glu268, His271, Asp296, Asp307, Asp309, and Asp339.

It belongs to the xylose isomerase family. As to quaternary structure, homotetramer. Mg(2+) is required as a cofactor.

The protein resides in the cytoplasm. The enzyme catalyses alpha-D-xylose = alpha-D-xylulofuranose. The chain is Xylose isomerase from Actinobacillus pleuropneumoniae serotype 5b (strain L20).